A 492-amino-acid polypeptide reads, in one-letter code: 3-octaprenyl-4-hydroxybenzoate carboxy-lyase (492 aa).

Asparagine 177 serves as a coordination point for Mn(2+). Prenylated FMN-binding positions include 180–182, 194–196, and 199–200; these read IYR, RWL, and RG. Position 243 (glutamate 243) interacts with Mn(2+). Aspartate 292 acts as the Proton donor in catalysis.

Belongs to the UbiD family. Homohexamer. Prenylated FMN serves as cofactor. It depends on Mn(2+) as a cofactor.

The protein resides in the cell membrane. The enzyme catalyses a 4-hydroxy-3-(all-trans-polyprenyl)benzoate + H(+) = a 2-(all-trans-polyprenyl)phenol + CO2. The protein operates within cofactor biosynthesis; ubiquinone biosynthesis. In terms of biological role, catalyzes the decarboxylation of 3-octaprenyl-4-hydroxy benzoate to 2-octaprenylphenol, an intermediate step in ubiquinone biosynthesis. This chain is 3-octaprenyl-4-hydroxybenzoate carboxy-lyase, found in Neisseria meningitidis serogroup A / serotype 4A (strain DSM 15465 / Z2491).